A 399-amino-acid chain; its full sequence is Endo-1,4-beta-xylanase C (399 aa).

The N-terminal stretch at 1–20 (MFKFSASLAALAALVPFVAA) is a signal peptide. One can recognise a CBM1 domain in the interval 21 to 56 (QSPEWGQCGGIGWTGPTTCVAGTTCVESNPYYSQCL). The region spanning 81–396 (SAKLHTLAKA…KPAFNGIAAG (316 aa)) is the GH10 domain. Catalysis depends on glutamate 212, which acts as the Proton donor. The active-site Nucleophile is glutamate 318. Cysteine 346 and cysteine 352 are oxidised to a cystine.

The protein belongs to the glycosyl hydrolase 10 (cellulase F) family.

The protein localises to the secreted. It catalyses the reaction Endohydrolysis of (1-&gt;4)-beta-D-xylosidic linkages in xylans.. The protein operates within glycan degradation; xylan degradation. Endo-1,4-beta-xylanase involved in the hydrolysis of xylan, a major structural heterogeneous polysaccharide found in plant biomass representing the second most abundant polysaccharide in the biosphere, after cellulose. This chain is Endo-1,4-beta-xylanase C (xynC), found in Phanerodontia chrysosporium (White-rot fungus).